The following is a 322-amino-acid chain: Probable cardiolipin synthase (CMP-forming) (322 aa).

3 consecutive transmembrane segments (helical) span residues 143–163, 199–219, and 289–309; these read IGYV…AFAG, LVIS…IVVF, and LQGL…SYVM.

The protein belongs to the CDP-alcohol phosphatidyltransferase class-I family.

It localises to the mitochondrion inner membrane. It catalyses the reaction a CDP-1,2-diacyl-sn-glycerol + a 1,2-diacyl-sn-glycero-3-phospho-(1'-sn-glycerol) = a cardiolipin + CMP + H(+). Functionally, catalyzes the synthesis of cardiolipin (CL) (diphosphatidylglycerol) by specifically transferring a phosphatidyl group from CDP-diacylglycerol to phosphatidylglycerol (PG). CL is a key phospholipid in mitochondrial membranes and plays important roles in maintaining the functional integrity and dynamics of mitochondria under both optimal and stress conditions. The chain is Probable cardiolipin synthase (CMP-forming) (CLS) from Drosophila melanogaster (Fruit fly).